Here is a 509-residue protein sequence, read N- to C-terminus: MEELQGYLKIDRSRERDFLYPLLFQEYIYALAHDHGLNKSILYEPMENLGYDKKYSLIIVKRLITRMYQQKHLIIFTNDSNTNFFFGHNKNLDSQMISEGVAVIVELPFSLRLVSSPESKEIDKSMTTLRSIHSIFPFLEDKLLHLNHVLDILIPYPIHLELLVQTLRSWIQDAPFLHLLRFFLYKYHNWNSLITQKTKMILFFSKENQRFFLFLYNFHVYESESIFVFLRKQSYHLRSTSSRAFLDRTHFYRKIEHFLVDFRNDFHTILWLFKDPFIQYFRFQGKSILSSKGTPLLMKKWKYYLVNLWECHFYFWSQPDRIHINQLSNHFIDFLGYLSSVRPTPSAVRSQMLEKSFIIDIVIKKFDTIVPIIPLIGSLAKAKFCNFSGHPISKPAWADSSDSDIIDRFGRICRNLSHYYSGSSKKKSLYRIKYILRLSCARTLARKHKSTVRSFLKRLGSEFLEEFLMEEEQVLSFILPRISYFSKRLYKERIWYFDIIRINDLTNLS.

The protein belongs to the intron maturase 2 family. MatK subfamily.

It is found in the plastid. The protein localises to the chloroplast. In terms of biological role, usually encoded in the trnK tRNA gene intron. Probably assists in splicing its own and other chloroplast group II introns. This chain is Maturase K, found in Clematis lasiantha (Pipestem clematis).